Here is a 322-residue protein sequence, read N- to C-terminus: Malate dehydrogenase (322 aa).

NAD(+) contacts are provided by residues 10-15 and aspartate 34; that span reads GSGQIG. Arginine 83 and arginine 89 together coordinate substrate. NAD(+)-binding positions include asparagine 96 and 119–121; that span reads ITN. Substrate is bound by residues asparagine 121 and arginine 152. The active-site Proton acceptor is histidine 176.

The protein belongs to the LDH/MDH superfamily. MDH type 3 family.

It catalyses the reaction (S)-malate + NAD(+) = oxaloacetate + NADH + H(+). Its function is as follows. Catalyzes the reversible oxidation of malate to oxaloacetate. The sequence is that of Malate dehydrogenase from Bradyrhizobium sp. (strain BTAi1 / ATCC BAA-1182).